Consider the following 271-residue polypeptide: Protein MGF 360-15R (271 aa).

It belongs to the asfivirus MGF 360 family.

Its function is as follows. Plays a role in virus cell tropism, and may be required for efficient virus replication in macrophages. This African swine fever virus (isolate Tick/Malawi/Lil 20-1/1983) (ASFV) protein is Protein MGF 360-15R.